Reading from the N-terminus, the 190-residue chain is Hypoxanthine/guanine phosphoribosyltransferase (190 aa).

The protein belongs to the purine/pyrimidine phosphoribosyltransferase family. Archaeal HPRT subfamily. Homodimer.

Its subcellular location is the cytoplasm. The enzyme catalyses IMP + diphosphate = hypoxanthine + 5-phospho-alpha-D-ribose 1-diphosphate. It carries out the reaction GMP + diphosphate = guanine + 5-phospho-alpha-D-ribose 1-diphosphate. Its pathway is purine metabolism; IMP biosynthesis via salvage pathway; IMP from hypoxanthine: step 1/1. In terms of biological role, catalyzes a salvage reaction resulting in the formation of IMP that is energically less costly than de novo synthesis. In Methanothrix thermoacetophila (strain DSM 6194 / JCM 14653 / NBRC 101360 / PT) (Methanosaeta thermophila), this protein is Hypoxanthine/guanine phosphoribosyltransferase.